The chain runs to 227 residues: Prolactin (227 aa).

Positions 1-28 (MNIKGSPWKGSLLLLLVSNLLLCQSVAP) are cleaved as a signal peptide. Cysteines 32 and 39 form a disulfide. Phosphoserine is present on Ser-54. Residue Asn-59 is glycosylated (N-linked (GlcNAc...) asparagine; partial). 4 positions are modified to phosphoserine: Ser-62, Ser-118, Ser-163, and Ser-194. 2 disulfide bridges follow: Cys-86–Cys-202 and Cys-219–Cys-227.

It belongs to the somatotropin/prolactin family. As to quaternary structure, interacts with PRLR.

Its subcellular location is the secreted. In terms of biological role, prolactin acts primarily on the mammary gland by promoting lactation. This chain is Prolactin (PRL), found in Homo sapiens (Human).